Reading from the N-terminus, the 257-residue chain is Isoprenyl transferase (257 aa).

Residue D33 is part of the active site. D33 contributes to the Mg(2+) binding site. Residues G34–R37, W38, R46, H50, and S78–E80 each bind substrate. The active-site Proton acceptor is N81. Substrate contacts are provided by residues W82, R84, R204, and R210–S212. E223 lines the Mg(2+) pocket.

The protein belongs to the UPP synthase family. Homodimer. Mg(2+) is required as a cofactor.

Catalyzes the condensation of isopentenyl diphosphate (IPP) with allylic pyrophosphates generating different type of terpenoids. This chain is Isoprenyl transferase, found in Clostridium acetobutylicum (strain ATCC 824 / DSM 792 / JCM 1419 / IAM 19013 / LMG 5710 / NBRC 13948 / NRRL B-527 / VKM B-1787 / 2291 / W).